Reading from the N-terminus, the 118-residue chain is Large ribosomal subunit protein bL19 (118 aa).

Belongs to the bacterial ribosomal protein bL19 family.

In terms of biological role, this protein is located at the 30S-50S ribosomal subunit interface and may play a role in the structure and function of the aminoacyl-tRNA binding site. This is Large ribosomal subunit protein bL19 from Beutenbergia cavernae (strain ATCC BAA-8 / DSM 12333 / CCUG 43141 / JCM 11478 / NBRC 16432 / NCIMB 13614 / HKI 0122).